Reading from the N-terminus, the 272-residue chain is Single-strand selective monofunctional uracil DNA glycosylase (272 aa).

The tract at residues 1 to 27 (MAVPQPFPSGPHLQPAGALMEPQPSPR) is disordered. Substrate-binding residues include methionine 86, phenylalanine 100, and asparagine 165. The DNA-binding stretch occupies residues 175-189 (SGRNITPAELPAKQR). Histidine 241 is a substrate binding site.

The protein belongs to the uracil-DNA glycosylase (UDG) superfamily. SMUG1 family.

Its subcellular location is the nucleus. Functionally, recognizes base lesions in the genome and initiates base excision DNA repair. Acts as a monofunctional DNA glycosylase specific for uracil (U) residues in DNA with a preference for single-stranded DNA substrates. The activity is greater toward mismatches (U/G) compared to matches (U/A). Excises uracil (U), 5-formyluracil (fU) and uracil derivatives bearing an oxidized group at C5 [5-hydroxyuracil (hoU) and 5-hydroxymethyluracil (hmU)] in ssDNA and dsDNA, but not analogous cytosine derivatives (5-hydroxycytosine and 5-formylcytosine), nor other oxidized bases. The activity is damage-specific and salt-dependent. The substrate preference is the following: ssDNA &gt; dsDNA (G pair) = dsDNA (A pair) at low salt concentration, and dsDNA (G pair) &gt; dsDNA (A pair) &gt; ssDNA at high salt concentration. This is Single-strand selective monofunctional uracil DNA glycosylase (SMUG1) from Bos taurus (Bovine).